The chain runs to 145 residues: 3-dehydroquinate dehydratase (145 aa).

Y23 acts as the Proton acceptor in catalysis. The substrate site is built by N73, H79, and D86. H99 functions as the Proton donor in the catalytic mechanism. Substrate contacts are provided by residues 100 to 101 (LS) and R110.

This sequence belongs to the type-II 3-dehydroquinase family. In terms of assembly, homododecamer.

It carries out the reaction 3-dehydroquinate = 3-dehydroshikimate + H2O. It participates in metabolic intermediate biosynthesis; chorismate biosynthesis; chorismate from D-erythrose 4-phosphate and phosphoenolpyruvate: step 3/7. Catalyzes a trans-dehydration via an enolate intermediate. This chain is 3-dehydroquinate dehydratase, found in Desulfitobacterium hafniense (strain Y51).